We begin with the raw amino-acid sequence, 62 residues long: MKYAEISSLAIEELKEKIKIEQENLRKLKFAHTISPIENPTKIKNTRRLIARLETALNVKGS.

This sequence belongs to the universal ribosomal protein uL29 family.

The chain is Large ribosomal subunit protein uL29 from Amoebophilus asiaticus (strain 5a2).